We begin with the raw amino-acid sequence, 480 residues long: MEWETVIGLEVHVQLATKTKIFSGASTAFGAEPNTQACAIDLAMPGTLPSPNAKAFEYAIMFGLAVNAEIGKRSVFERKNYFYPDSPKGYQTTQLEQPIVGAGYIDIELDDGSTKRIRIHHAHLEEDAGKSLHEDFHDMTGIDLNRAGTPLIEVVTEPDISNKAEAVAFARKLHAIVTSLGIGDGDMSQGSMRFDVNISVRLKGQELGTRTETKNLNSFRFMERCIDQEVQRQIEVLEDGGKITQETRLYNGDTHTARPMRSKEEANDYRYFPCPDLLPVEITDEYIQSLRDKLPELPDARKARFIEQYGLSDYDAGLLGSDANTAHYFEVCAKACDDAKLSANWVAGELAARLNNEELAIQNSPVNAEQLAGLIARIKDQTISNKIAKQVFEAMWQGEGDADTVIEAKGLKQVSDSGALEKMVDDVMAANQQQVDAYRAAEPDKRKKMLGFFVGQIMKASKGQANPQQLNQILLSKLDS.

It belongs to the GatB/GatE family. GatB subfamily. In terms of assembly, heterotrimer of A, B and C subunits.

The catalysed reaction is L-glutamyl-tRNA(Gln) + L-glutamine + ATP + H2O = L-glutaminyl-tRNA(Gln) + L-glutamate + ADP + phosphate + H(+). It carries out the reaction L-aspartyl-tRNA(Asn) + L-glutamine + ATP + H2O = L-asparaginyl-tRNA(Asn) + L-glutamate + ADP + phosphate + 2 H(+). Its function is as follows. Allows the formation of correctly charged Asn-tRNA(Asn) or Gln-tRNA(Gln) through the transamidation of misacylated Asp-tRNA(Asn) or Glu-tRNA(Gln) in organisms which lack either or both of asparaginyl-tRNA or glutaminyl-tRNA synthetases. The reaction takes place in the presence of glutamine and ATP through an activated phospho-Asp-tRNA(Asn) or phospho-Glu-tRNA(Gln). The protein is Aspartyl/glutamyl-tRNA(Asn/Gln) amidotransferase subunit B of Saccharophagus degradans (strain 2-40 / ATCC 43961 / DSM 17024).